The chain runs to 383 residues: Histidine decarboxylase (383 aa).

His-120 contacts substrate. The residue at position 233 (Lys-233) is an N6-(pyridoxal phosphate)lysine.

The protein belongs to the group II decarboxylase family. In terms of assembly, homotetramer. Pyridoxal 5'-phosphate is required as a cofactor.

The catalysed reaction is L-histidine + H(+) = histamine + CO2. In Acinetobacter baumannii (strain AB307-0294), this protein is Histidine decarboxylase.